Reading from the N-terminus, the 743-residue chain is Protein will decrease acetylation (743 aa).

WD repeat units follow at residues 389–428, 493–524, 535–576, 577–618, 619–660, and 661–702; these read ERSR…CRGK, LRGH…MRCW, YRSH…ALII, YAGH…LMRV, FADC…QLAE, and LKDH…PMSD.

It belongs to the WD repeat TAF5 family. In terms of assembly, component of the Spt-Ada-Gcn5 acetyltransferase (SAGA) complex consisting of wda/Taf5L, Saf6, Taf9, Taf10b, Taf12, Ada1, Spt3, Spt7, Spt20, Sf3b3, Sf3b5, Nipped-A/Tra1, a histone acetyltransferase (HAT) module made up of Gcn5, Ada2b (Isoform B), Ada3 and Sgf29, and a deubiquitinase (DUB) module made up of not/nonstop, Sgf11 and e(y)2 tethered to SAGA by Atxn7. Not essential for the assembly or integrity of the SAGA complex. Not a component of the Ada2a-containing ATAC complex.

It localises to the nucleus. The protein resides in the chromosome. Functionally, component of the transcription regulatory complex SAGA, a multiprotein complex that activates transcription by remodeling chromatin and mediating histone acetylation and deubiquitination. The SAGA complex predominantly acetylates histone H3. Involved in acetylation of histone H3 on 'Lys-10' (H3K9ac) by the SAGA complex in the larval central nervous system. Involved in SAGA complex coactivator functions. Required for oogenesis. This is Protein will decrease acetylation from Drosophila melanogaster (Fruit fly).